We begin with the raw amino-acid sequence, 153 residues long: Large ribosomal subunit protein eL15 (153 aa).

A Glycyl lysine isopeptide (Lys-Gly) (interchain with G-Cter in SUMO2) cross-link involves residue K32. Phosphoserine occurs at positions 46 and 49. Positions 114–135 are disordered; sequence TSAGRKSRGLGKGHKFHHTIGG. Positions 118–131 are enriched in basic residues; the sequence is RKSRGLGKGHKFHH.

It belongs to the eukaryotic ribosomal protein eL15 family. As to quaternary structure, component of the large ribosomal subunit. Interacts with IFIT1 (via TPR repeats 1-4).

The protein localises to the cytoplasm. Functionally, component of the large ribosomal subunit. The ribosome is a large ribonucleoprotein complex responsible for the synthesis of proteins in the cell. In Sus scrofa (Pig), this protein is Large ribosomal subunit protein eL15 (RPL15).